The following is a 457-amino-acid chain: Adenylyltransferase and sulfurtransferase MOCS3 (457 aa).

Residues 40–60 (ANGGGNGDGLADEGGERNTGT) are disordered. Threonine 63 carries the phosphothreonine modification. ATP contacts are provided by residues glycine 102, aspartate 123, 130 to 134 (SNFHR), lysine 147, and 191 to 192 (DN). Positions 233 and 236 each coordinate Zn(2+). Cysteine 250 acts as the Glycyl thioester intermediate; for adenylyltransferase activity in catalysis. The Zn(2+) site is built by cysteine 309 and cysteine 312. A Rhodanese domain is found at 358 to 455 (ESQPHLLFDV…WTRKVDPDFP (98 aa)). Catalysis depends on cysteine 414, which acts as the Cysteine persulfide intermediate; for sulfurtransferase activity.

In the N-terminal section; belongs to the HesA/MoeB/ThiF family. UBA4 subfamily. The cofactor is Zn(2+).

The protein resides in the cytoplasm. It localises to the cytosol. The enzyme catalyses [molybdopterin-synthase sulfur-carrier protein]-C-terminal Gly-Gly + ATP + H(+) = [molybdopterin-synthase sulfur-carrier protein]-C-terminal Gly-Gly-AMP + diphosphate. It carries out the reaction [molybdopterin-synthase sulfur-carrier protein]-C-terminal Gly-Gly-AMP + S-sulfanyl-L-cysteinyl-[cysteine desulfurase] + AH2 = [molybdopterin-synthase sulfur-carrier protein]-C-terminal-Gly-aminoethanethioate + L-cysteinyl-[cysteine desulfurase] + A + AMP + 2 H(+). The protein operates within tRNA modification; 5-methoxycarbonylmethyl-2-thiouridine-tRNA biosynthesis. It participates in cofactor biosynthesis; molybdopterin biosynthesis. Plays a central role in 2-thiolation of mcm(5)S(2)U at tRNA wobble positions of cytosolic tRNA(Lys), tRNA(Glu) and tRNA(Gln). Also essential during biosynthesis of the molybdenum cofactor. Acts by mediating the C-terminal thiocarboxylation of sulfur carriers URM1 and MOCS2A. Its N-terminus first activates URM1 and MOCS2A as acyl-adenylates (-COAMP), then the persulfide sulfur on the catalytic cysteine is transferred to URM1 and MOCS2A to form thiocarboxylation (-COSH) of their C-terminus. The reaction probably involves hydrogen sulfide that is generated from the persulfide intermediate and that acts as a nucleophile towards URM1 and MOCS2A. Subsequently, a transient disulfide bond is formed. Does not use thiosulfate as sulfur donor; NFS1 probably acting as a sulfur donor for thiocarboxylation reactions. The sequence is that of Adenylyltransferase and sulfurtransferase MOCS3 from Drosophila willistoni (Fruit fly).